A 293-amino-acid chain; its full sequence is Methoxy mycolic acid synthase MmaA3 (293 aa).

S-adenosyl-L-methionine contacts are provided by residues 39 to 40 (YS), 78 to 80 (GCG), 100 to 105 (TLSKNQ), 129 to 130 (WA), and Ile-142. Cys-275 is an active-site residue.

The protein belongs to the CFA/CMAS family.

Its pathway is lipid metabolism; mycolic acid biosynthesis. Its function is as follows. Involved in the biosynthesis of methoxymycolic acid. It catalyzes the O-methylation of the hydroxy group of the hydroxymycolate to form a methyl ether. The protein is Methoxy mycolic acid synthase MmaA3 (cmaB) of Mycobacterium bovis (strain ATCC BAA-935 / AF2122/97).